We begin with the raw amino-acid sequence, 87 residues long: Non-structural protein NS3 (87 aa).

Its subcellular location is the host nucleus. Functionally, plays a role in viral DNA replication. The sequence is that of Non-structural protein NS3 from Mustela (ADV).